The sequence spans 1038 residues: uncharacterized protein (1038 aa).

A compositionally biased stretch (polar residues) spans 1 to 14 (MEENTAQKQSNATG). The segment at 1–100 (MEENTAQKQS…QSENENYDFS (100 aa)) is disordered. The span at 58–71 (NPERELNSDGTDRI) shows a compositional bias: basic and acidic residues. A compositionally biased stretch (acidic residues) spans 72 to 83 (IEEEEEEDDIEN). Phosphoserine is present on residues serine 112, serine 113, and serine 114. Disordered stretches follow at residues 144 to 201 (GKDP…VKRR), 360 to 381 (ELDNTSEKATLETSSKPVTEQA), 422 to 441 (SHSNHSNEKFEQIPSPDEKL), 454 to 526 (QTTK…SGEL), and 556 to 575 (TNSEVETVTNDPSFSQQPGT). The segment covering 156-179 (SSMASSSTRSSQSSQVSAIQPQSQ) has biased composition (low complexity). A compositionally biased stretch (basic and acidic residues) spans 180–198 (DDNRVSDIRQMENRRELNV). Composition is skewed to basic and acidic residues over residues 426–441 (HSNEKFEQIPSPDEKL) and 489–505 (DAEKEKDENLSKPEHHP). The residue at position 436 (serine 436) is a Phosphoserine. Residues 506–522 (SITSVNSPFLYSPSKQP) show a composition bias toward polar residues. Phosphoserine is present on residues serine 618 and serine 856. Disordered stretches follow at residues 803–864 (RGSL…ASAD), 940–974 (GEAPKEAPPPPRSEPVSTTTKLAKRITQPSLSPAR), and 1005–1024 (KAKSEQSNAKSSSSSIKESK). Over residues 826–859 (TLSLKTSTTGLSSHSKSAENNSTQQSTTSPSINS) the composition is skewed to low complexity. A compositionally biased stretch (polar residues) spans 955–974 (VSTTTKLAKRITQPSLSPAR). Low complexity predominate over residues 1009–1020 (EQSNAKSSSSSI).

The protein resides in the cytoplasm. This is an uncharacterized protein from Schizosaccharomyces pombe (strain 972 / ATCC 24843) (Fission yeast).